We begin with the raw amino-acid sequence, 238 residues long: Serine protease SplE (238 aa).

The first 36 residues, 1 to 36, serve as a signal peptide directing secretion; that stretch reads MNKNIIIKSIAALTILTSVTGVGTTMVEGIQQTAKA. Active-site charge relay system residues include H75, D113, and S191.

This sequence belongs to the peptidase S1B family.

The protein localises to the secreted. This Staphylococcus aureus protein is Serine protease SplE (splE).